A 178-amino-acid chain; its full sequence is MKLLAPVLWAMAALGVTWLVAVDSKESCTKHSNGCSTPLRLPCQEYFRPACDIHDNCYHCGTIFGISRKECDDAFLKDMNTLCKKLGSNSATCPARGKREVTSHRATSIAHSRLWKTALDQKSFLNRKARQAILLTPNSCLYWANNFYMAVHVFGARSYSRTTDPKDCQGLKHCLPNH.

Positions 1 to 24 (MKLLAPVLWAMAALGVTWLVAVDS) are cleaved as a signal peptide. 3 positions are modified to 4-hydroxyproline; partial: Pro-38, Pro-42, and Pro-49. Residue His-54 is part of the active site. Positions 98–130 (KREVTSHRATSIAHSRLWKTALDQKSFLNRKAR) are cleaved as a propeptide — interchain peptide. At Gln-131 the chain carries Pyrrolidone carboxylic acid. The residue at position 137 (Pro-137) is a 4-hydroxyproline; partial.

Belongs to the phospholipase A2 family. Group IX subfamily. In terms of assembly, heterodimer of an alpha and a beta chain; probably disulfide-linked. The cofactor is Ca(2+). As to expression, expressed by the venom duct.

It localises to the secreted. It carries out the reaction a 1,2-diacyl-sn-glycero-3-phosphocholine + H2O = a 1-acyl-sn-glycero-3-phosphocholine + a fatty acid + H(+). Catalyzes the calcium-dependent hydrolysis of the 2-acyl groups in 3-sn-phosphoglycerides. This is Conodipine-P1 from Conus purpurascens (Purple cone).